A 265-amino-acid polypeptide reads, in one-letter code: Small ribosomal subunit protein uS2 (265 aa).

The tract at residues 226 to 265 (AAAPNSASVREEEFSADAADEGKGRRAPAKKGDKKADAAE) is disordered. Residues 245-265 (DEGKGRRAPAKKGDKKADAAE) show a composition bias toward basic and acidic residues.

This sequence belongs to the universal ribosomal protein uS2 family.

This is Small ribosomal subunit protein uS2 from Xanthomonas axonopodis pv. citri (strain 306).